The sequence spans 526 residues: Cytochrome P450 monooxygenase patI (526 aa).

Residues 1–6 (MDILQL) lie on the Cytoplasmic side of the membrane. Residues 7-29 (APTHLLAILLSSTSALFLITYLL) form a helical membrane-spanning segment. The Lumenal segment spans residues 30–526 (RAGHRPSDLP…EAQEVFARFD (497 aa)). N81 carries an N-linked (GlcNAc...) asparagine glycan. C446 contributes to the heme binding site.

It belongs to the cytochrome P450 family. Heme is required as a cofactor.

Its subcellular location is the endoplasmic reticulum membrane. It carries out the reaction 3-hydroxybenzyl alcohol + reduced [NADPH--hemoprotein reductase] + O2 = gentisyl alcohol + oxidized [NADPH--hemoprotein reductase] + H2O + H(+). The protein operates within mycotoxin biosynthesis; patulin biosynthesis. Cytochrome P450 monooxygenase; part of the gene cluster that mediates the biosynthesis of patulin, an acetate-derived tetraketide mycotoxin produced by several fungal species that shows antimicrobial properties against several bacteria. PatI catalyzes the conversion of m-hydroxybenzyl alcohol into gentisyl alcohol. The pathway begins with the synthesis of 6-methylsalicylic acid by the polyketide synthase (PKS) patK via condensation of acetate and malonate units. The 6-methylsalicylic acid decarboxylase patG then catalyzes the decarboxylation of 6-methylsalicylic acid to yield m-cresol (also known as 3-methylphenol). These first reactions occur in the cytosol. The intermediate m-cresol is then transported into the endoplasmic reticulum where the cytochrome P450 monooxygenase patH converts it to m-hydroxybenzyl alcohol, which is further converted to gentisyl alcohol by the cytochrome P450 monooxygenase patI. The oxidoreductases patJ and patO further convert gentisyl alcohol to isoepoxydon in the vacuole. PatN catalyzes then the transformation of isoepoxydon into phyllostine. The cluster protein patF is responsible for the conversion from phyllostine to neopatulin whereas the alcohol dehydrogenase patD converts neopatulin to E-ascladiol. The steps between isoepoxydon and E-ascladiol occur in the cytosol, and E-ascladiol is probably secreted to the extracellular space by one of the cluster-specific transporters patC or patM. Finally, the secreted patulin synthase patE catalyzes the conversion of E-ascladiol to patulin. The polypeptide is Cytochrome P450 monooxygenase patI (Penicillium expansum (Blue mold rot fungus)).